The chain runs to 305 residues: Protein-methionine-sulfoxide reductase catalytic subunit MsrP (305 aa).

The segment at residues 1 to 54 (MLIRKPADHLPSEITSESVYFNRRQFMAGAAGLLLSAETLAGLAAKKSPLSQLA) is a signal peptide (tat-type signal). Residues asparagine 69, 72–73 (YE), cysteine 126, threonine 161, asparagine 209, arginine 214, and 225–227 (SIK) each bind Mo-molybdopterin.

Belongs to the MsrP family. In terms of assembly, heterodimer of a catalytic subunit (MsrP) and a heme-binding subunit (MsrQ). It depends on Mo-molybdopterin as a cofactor. In terms of processing, predicted to be exported by the Tat system. The position of the signal peptide cleavage has not been experimentally proven.

The protein resides in the periplasm. The enzyme catalyses L-methionyl-[protein] + a quinone + H2O = L-methionyl-(S)-S-oxide-[protein] + a quinol. The catalysed reaction is L-methionyl-[protein] + a quinone + H2O = L-methionyl-(R)-S-oxide-[protein] + a quinol. Its function is as follows. Part of the MsrPQ system that repairs oxidized periplasmic proteins containing methionine sulfoxide residues (Met-O), using respiratory chain electrons. Thus protects these proteins from oxidative-stress damage caused by reactive species of oxygen and chlorine generated by the host defense mechanisms. MsrPQ is essential for the maintenance of envelope integrity under bleach stress, rescuing a wide series of structurally unrelated periplasmic proteins from methionine oxidation. The catalytic subunit MsrP is non-stereospecific, being able to reduce both (R-) and (S-) diastereoisomers of methionine sulfoxide. This is Protein-methionine-sulfoxide reductase catalytic subunit MsrP from Chromobacterium violaceum (strain ATCC 12472 / DSM 30191 / JCM 1249 / CCUG 213 / NBRC 12614 / NCIMB 9131 / NCTC 9757 / MK).